A 229-amino-acid polypeptide reads, in one-letter code: Orotate phosphoribosyltransferase (229 aa).

5-phospho-alpha-D-ribose 1-diphosphate is bound by residues arginine 107, lysine 108, lysine 111, histidine 113, and 133-141; that span reads EDLTTAGGS. Residue threonine 137 coordinates orotate.

This sequence belongs to the purine/pyrimidine phosphoribosyltransferase family. PyrE subfamily. In terms of assembly, homodimer. Requires Mg(2+) as cofactor.

The enzyme catalyses orotidine 5'-phosphate + diphosphate = orotate + 5-phospho-alpha-D-ribose 1-diphosphate. Its pathway is pyrimidine metabolism; UMP biosynthesis via de novo pathway; UMP from orotate: step 1/2. Functionally, catalyzes the transfer of a ribosyl phosphate group from 5-phosphoribose 1-diphosphate to orotate, leading to the formation of orotidine monophosphate (OMP). This is Orotate phosphoribosyltransferase from Rhizobium etli (strain ATCC 51251 / DSM 11541 / JCM 21823 / NBRC 15573 / CFN 42).